We begin with the raw amino-acid sequence, 410 residues long: Multifunctional CCA protein (410 aa).

ATP contacts are provided by Gly8 and Arg11. CTP-binding residues include Gly8 and Arg11. Mg(2+)-binding residues include Glu21 and Asp23. ATP-binding residues include Arg91, Arg137, and Arg140. Arg91, Arg137, and Arg140 together coordinate CTP. In terms of domain architecture, HD spans 228 to 329 (TGIHVMMALR…LKLFDRLDVW (102 aa)).

Belongs to the tRNA nucleotidyltransferase/poly(A) polymerase family. Bacterial CCA-adding enzyme type 1 subfamily. In terms of assembly, monomer. Can also form homodimers and oligomers. The cofactor is Mg(2+). Requires Ni(2+) as cofactor.

It carries out the reaction a tRNA precursor + 2 CTP + ATP = a tRNA with a 3' CCA end + 3 diphosphate. The catalysed reaction is a tRNA with a 3' CCA end + 2 CTP + ATP = a tRNA with a 3' CCACCA end + 3 diphosphate. Functionally, catalyzes the addition and repair of the essential 3'-terminal CCA sequence in tRNAs without using a nucleic acid template. Adds these three nucleotides in the order of C, C, and A to the tRNA nucleotide-73, using CTP and ATP as substrates and producing inorganic pyrophosphate. tRNA 3'-terminal CCA addition is required both for tRNA processing and repair. Also involved in tRNA surveillance by mediating tandem CCA addition to generate a CCACCA at the 3' terminus of unstable tRNAs. While stable tRNAs receive only 3'-terminal CCA, unstable tRNAs are marked with CCACCA and rapidly degraded. The sequence is that of Multifunctional CCA protein from Tolumonas auensis (strain DSM 9187 / NBRC 110442 / TA 4).